Reading from the N-terminus, the 223-residue chain is Bone marrow proteoglycan (223 aa).

Positions 1–16 are cleaved as a signal peptide; that stretch reads MKFPLLLALLVGGASA. The propeptide at 17–106 is acidic; it reads LHLSSETSDS…TSLMGDSGCK (90 aa). The disordered stretch occupies residues 20–81; sequence SSETSDSKSP…PGDEGAVSGQ (62 aa). Thr-23 carries O-linked (GalNAc...) threonine; partial glycosylation. Ser-24 carries O-linked (GalNAc...) serine glycosylation. O-linked (Xyl...) (chondroitin sulfate) serine glycosylation occurs at Ser-66. In terms of domain architecture, C-type lectin spans 124-223; the sequence is SVCRRCYRGT…VKRRPFICSY (100 aa). 2 disulfides stabilise this stretch: Cys-126–Cys-221 and Cys-198–Cys-213.

Post-translationally, nitrated.

It localises to the secreted. Functionally, cytotoxin and helminthotoxin. MBP also induces non-cytolytic histamine release from basophils. It is involved in antiparasitic defense mechanisms and immune hypersensitivity reactions. This Mus musculus (Mouse) protein is Bone marrow proteoglycan (Prg2).